The chain runs to 750 residues: Eukaryotic translation initiation factor 3 subunit B (750 aa).

Residues 42–128 (TFVVVDGLPE…HTLRVNKMTD (87 aa)) form the RRM domain. 4 WD repeats span residues 195–234 (DRQQ…RLRR), 236–292 (PHPF…PLRS), 309–348 (SAKF…LMDK), and 519–562 (LDKK…EKPE).

The protein belongs to the eIF-3 subunit B family. In terms of assembly, component of the eukaryotic translation initiation factor 3 (eIF-3) complex.

Its subcellular location is the cytoplasm. In terms of biological role, RNA-binding component of the eukaryotic translation initiation factor 3 (eIF-3) complex, which is involved in protein synthesis of a specialized repertoire of mRNAs and, together with other initiation factors, stimulates binding of mRNA and methionyl-tRNAi to the 40S ribosome. The eIF-3 complex specifically targets and initiates translation of a subset of mRNAs involved in cell proliferation. The polypeptide is Eukaryotic translation initiation factor 3 subunit B (Chaetomium globosum (strain ATCC 6205 / CBS 148.51 / DSM 1962 / NBRC 6347 / NRRL 1970) (Soil fungus)).